Here is a 904-residue protein sequence, read N- to C-terminus: MSATTVSQFAVELKMPVVALLEQLGKAGVGKSDANDMLNDQDKTRLLDYLRRAHGDESQTKITLTRKQTSEIKATDSHGRARTVQVEVRKKRVLVKRDIGEHAPEVELEASNALQEEVSAPEVIPEPVVEVVPEPVIEVVPEPVVEIVPEPVVEAPVEVPVEEVVLEKAAPVAPTRASIIGEKELQARAEESRRYNQLREIQERELREKQAREAQLVQMRQQAELAAAAAKAAELAKNQAATQAKTSEGAEKGTLHKKPETPGKKGDKGGRAADDGKKKGGIKTRGSDGAGGWKDNRHGHKKSHKVDDGQGSFQAPTEPVVREVHIPETISVSDLAHKMAIKATEIIKVMMKMGSMVTINQVLDQETAMIVVEEMGHQALAAKLDDPDAFLEEHAEHKDVPLEHRAPVVTVMGHVDHGKTSLLDYIRRAKVASGEAGGITQHIGAYHVETDRGMVTFLDTPGHEAFTAMRARGAKATDIVILVVAADDGVMPQTKEAIHHAKAAGVPLVVAVNKIDKPDANPERVKQELVAEGVIPEEYGGDSPFVPVSAKKGTGIDELLEQVLLQAEILELTAQKDAPAKGLIIEARLDKGRGAVATMLVQSGTLKRGDIVLAGQVFGRVRAMLDENGKPINEAGPSIPVEILGLSDVPAAGEEAIVLGDEKKAREIALFRQGKFRDVKLAKQQAAKLENMFQQMEEGEVKTLPLIVKADVQGSQEALVQTLSKLSNEEVRVQIIHGAVGAISESDVNLAQASGAVIIGFNIRADAGSRKLAESFGVDIRYYNVIYDAVDEVKAALSGMLSPEKREQITGMVEIRQVFLVSKVGAIAGCYVLEGFVKRNSRVRLLRNNVVQWDGELDSLKRFKDDVKEVRSNFECGLSLRGNNDIQVGDQLEVYEIQEVARSL.

Residues 239–316 (QAATQAKTSE…DDGQGSFQAP (78 aa)) form a disordered region. Basic and acidic residues predominate over residues 248 to 278 (EGAEKGTLHKKPETPGKKGDKGGRAADDGKK). The tr-type G domain maps to 404–571 (HRAPVVTVMG…QVLLQAEILE (168 aa)). The tract at residues 413 to 420 (GHVDHGKT) is G1. 413–420 (GHVDHGKT) contributes to the GTP binding site. The tract at residues 438-442 (GITQH) is G2. Residues 459 to 462 (DTPG) are G3. Residues 459-463 (DTPGH) and 513-516 (NKID) each bind GTP. A G4 region spans residues 513–516 (NKID). A G5 region spans residues 549 to 551 (SAK).

The protein belongs to the TRAFAC class translation factor GTPase superfamily. Classic translation factor GTPase family. IF-2 subfamily.

The protein resides in the cytoplasm. Functionally, one of the essential components for the initiation of protein synthesis. Protects formylmethionyl-tRNA from spontaneous hydrolysis and promotes its binding to the 30S ribosomal subunits. Also involved in the hydrolysis of GTP during the formation of the 70S ribosomal complex. This Dechloromonas aromatica (strain RCB) protein is Translation initiation factor IF-2.